Consider the following 121-residue polypeptide: Mitochondrial intermembrane space cysteine motif-containing protein MIX14 (121 aa).

CHCH domains are found at residues 14–56 and 60–105; these read VANC…VPSV and MSEC…VKNK. Short sequence motifs (cx9C motif) lie at residues 17–27, 38–48, 63–73, and 87–97; these read CPQEFLQYHKC, CKDGRMILSTC, CSEPMKKYDQC, and CLGFLQDLRKC. 4 disulfide bridges follow: Cys17/Cys48, Cys27/Cys38, Cys63/Cys97, and Cys73/Cys87.

It localises to the mitochondrion intermembrane space. This Saccharomyces cerevisiae (strain ATCC 204508 / S288c) (Baker's yeast) protein is Mitochondrial intermembrane space cysteine motif-containing protein MIX14 (MIX14).